The chain runs to 154 residues: Protein FAM162A (154 aa).

The segment at 76–102 is required for proapoptotic activity; the sequence is RFKKEDEIPETVSLEMLDAAKNKMRVK. The chain crosses the membrane as a helical span at residues 103–120; sequence ISYLMIALTVVGCIFMVI.

Belongs to the UPF0389 family. As to quaternary structure, interacts with HSP90AB1; HSP90AB1 is essential for FAM162A mitochondrial localization and pro-apoptotic activity. Interacts with VDAC2; the interaction is probably involved in inducing mitochondrial permeability transition.

It is found in the mitochondrion membrane. Functionally, proposed to be involved in regulation of apoptosis; the exact mechanism may differ between cell types/tissues. May be involved in hypoxia-induced cell death of transformed cells implicating cytochrome C release and caspase activation (such as CASP9) and inducing mitochondrial permeability transition. May be involved in hypoxia-induced cell death of neuronal cells probably by promoting release of AIFM1 from mitochondria to cytoplasm and its translocation to the nucleus; however, the involvement of caspases has been reported conflictingly. This Homo sapiens (Human) protein is Protein FAM162A (FAM162A).